The primary structure comprises 270 residues: Sulfur carrier protein FdhD (270 aa).

Cys116 functions as the Cysteine persulfide intermediate in the catalytic mechanism. Position 253–258 (253–258 (FAREGK)) interacts with Mo-bis(molybdopterin guanine dinucleotide).

The protein belongs to the FdhD family.

It is found in the cytoplasm. Required for formate dehydrogenase (FDH) activity. Acts as a sulfur carrier protein that transfers sulfur from IscS to the molybdenum cofactor prior to its insertion into FDH. This Haemophilus influenzae (strain ATCC 51907 / DSM 11121 / KW20 / Rd) protein is Sulfur carrier protein FdhD.